A 305-amino-acid chain; its full sequence is Mat- sexual cell fertilization-promoting factor (305 aa).

Positions 38–93 (PAKKKVNGFMGYRSYYSSMFSQLPQKERSPILTTLWQQDPFHKEWDFMCAVYSAIR) form a DNA-binding region, alpha box.

Belongs to the MATALPHA1 family.

The protein resides in the nucleus. Functionally, controls fertilization, probably by determining the mating type. May be involved in the post-fertilization steps of the sexual cycle besides mat+. It is required for the developmental events that occur in the female organ after fertilization. The protein is Mat- sexual cell fertilization-promoting factor (FMR1) of Podospora anserina (Pleurage anserina).